A 433-amino-acid polypeptide reads, in one-letter code: MSDVLFIEGGRVIDPASGVDGVRTVVIRDGKVAEVAERVERPRDARAVDARNRWVTPGFVDLHVHLREPGQEYKETVATGARAAVAGGFTAVCAMPNTKPVNDCAAVTELVLARAAAAGLARVYPVGAISRGSNGEELAEYGELKASGCVALSDDGRPVMSSALMRRALEYARAFGLPLTVHEEDLHLVGKGVMHEGAAATRLGLKGIPSQAEDVMVLRDIALVELTGGRLHVAHVSTAGAVRAIREAKRRGLPVTGEVTPHHLALTDDDVGASGYSTDFKMNPPLRSAEDVRACREGLADGTLDAIATDHAPHSAVEKDVEFDAAANGIVGLETAFSVCLGLVREGALTERRLVEALTVGPARAFGLPAGTLARGAAADVAVLDAAAEWTVDPARLHSKGRNTPWKGRRLAGRCTHTIVGGRIVHEEGKADR.

Residues His63 and His65 each contribute to the Zn(2+) site. Substrate contacts are provided by residues 65–67 and Asn97; that span reads HLR. The Zn(2+) site is built by Asp155, His182, and His235. Asn283 contributes to the substrate binding site. Position 310 (Asp310) interacts with Zn(2+). Asp310 is an active-site residue. His314 serves as a coordination point for substrate.

Belongs to the metallo-dependent hydrolases superfamily. DHOase family. Class I DHOase subfamily. The cofactor is Zn(2+).

The enzyme catalyses (S)-dihydroorotate + H2O = N-carbamoyl-L-aspartate + H(+). Its pathway is pyrimidine metabolism; UMP biosynthesis via de novo pathway; (S)-dihydroorotate from bicarbonate: step 3/3. Functionally, catalyzes the reversible cyclization of carbamoyl aspartate to dihydroorotate. In Anaeromyxobacter sp. (strain K), this protein is Dihydroorotase.